The following is a 356-amino-acid chain: Probable neutral protease 2 homolog TRV_06370 (356 aa).

Residues 1–17 (MQFTALLAALGAPLALA) form the signal peptide. Positions 18–183 (ASIPAAAHNH…DDSTGVIDKR (166 aa)) are excised as a propeptide. 2 disulfide bridges follow: cysteine 191–cysteine 262 and cysteine 269–cysteine 287. Histidine 311 provides a ligand contact to Zn(2+). The active site involves glutamate 312. Zn(2+) contacts are provided by histidine 315 and aspartate 326.

Belongs to the peptidase M35 family. Zn(2+) serves as cofactor.

Its subcellular location is the secreted. It catalyses the reaction Preferential cleavage of bonds with hydrophobic residues in P1'. Also 3-Asn-|-Gln-4 and 8-Gly-|-Ser-9 bonds in insulin B chain.. Probable secreted metalloprotease that shows high activities on basic nuclear substrates such as histone and protamine. May be involved in virulence. The chain is Probable neutral protease 2 homolog TRV_06370 from Trichophyton verrucosum (strain HKI 0517).